The chain runs to 94 residues: Large ribosomal subunit protein bL27 (94 aa).

Residues 1–9 (MLKLNLQFF) constitute a propeptide that is removed on maturation. Residues 13–32 (KGLGSTKNGRDSESKRLGAK) form a disordered region. A compositionally biased stretch (basic and acidic residues) spans 20–32 (NGRDSESKRLGAK).

This sequence belongs to the bacterial ribosomal protein bL27 family. Post-translationally, the N-terminus is cleaved by ribosomal processing cysteine protease Prp.

This is Large ribosomal subunit protein bL27 from Staphylococcus saprophyticus subsp. saprophyticus (strain ATCC 15305 / DSM 20229 / NCIMB 8711 / NCTC 7292 / S-41).